The chain runs to 130 residues: Large ribosomal subunit protein eL32 (130 aa).

It belongs to the eukaryotic ribosomal protein eL32 family. As to quaternary structure, part of the 50S ribosomal subunit.

The sequence is that of Large ribosomal subunit protein eL32 from Pyrococcus furiosus (strain ATCC 43587 / DSM 3638 / JCM 8422 / Vc1).